Reading from the N-terminus, the 361-residue chain is MKKNLMLIFGGVSFEHEISCKSAYSIYLALLDLNKYNIYPVYIDKCTGIWYLLDSVSDPPKLIDIDVLPIVSLLPGIGIFSNNKNLDIDVVFPVVHGRTGEDGAIQGVLKVMDIPCIGAGIIGSAISSNKYFCKLLLKSFNIPLVPFIGFRQYDYFLDKEEVKRNVREALGYPVIVKPAVLGSSIGINVAYSENQIEFFIEEALKYDLTILIEKFIEAREIECSIIGNEKIKIFSPGEVIVQDFIFYDYDAKYSVIPGNSIIFNIPAQLETNQLLSIKEYAFLVYKNLELRGMARVDFFVEKKSGKIYLNEINTIPGFTDISMFAKMCSHDGLQFKDLVDNLINYAFQSYINRKKRINFED.

Positions 134-344 constitute an ATP-grasp domain; the sequence is KLLLKSFNIP…FKDLVDNLIN (211 aa). 167–222 is a binding site for ATP; sequence REALGYPVIVKPAVLGSSIGINVAYSENQIEFFIEEALKYDLTILIEKFIEAREIE. Mg(2+)-binding residues include Asp297, Glu311, and Asn313.

Belongs to the D-alanine--D-alanine ligase family. Requires Mg(2+) as cofactor. Mn(2+) is required as a cofactor.

It localises to the cytoplasm. It catalyses the reaction 2 D-alanine + ATP = D-alanyl-D-alanine + ADP + phosphate + H(+). The protein operates within cell wall biogenesis; peptidoglycan biosynthesis. Functionally, cell wall formation. This chain is D-alanine--D-alanine ligase, found in Borrelia garinii subsp. bavariensis (strain ATCC BAA-2496 / DSM 23469 / PBi) (Borreliella bavariensis).